The chain runs to 382 residues: UDP-N-acetylglucosamine--N-acetylmuramyl-(pentapeptide) pyrophosphoryl-undecaprenol N-acetylglucosamine transferase (382 aa).

UDP-N-acetyl-alpha-D-glucosamine is bound by residues 17-19, asparagine 137, arginine 179, serine 213, and glutamine 308; that span reads TAG.

It belongs to the glycosyltransferase 28 family. MurG subfamily.

The protein resides in the cell membrane. It carries out the reaction di-trans,octa-cis-undecaprenyl diphospho-N-acetyl-alpha-D-muramoyl-L-alanyl-D-glutamyl-meso-2,6-diaminopimeloyl-D-alanyl-D-alanine + UDP-N-acetyl-alpha-D-glucosamine = di-trans,octa-cis-undecaprenyl diphospho-[N-acetyl-alpha-D-glucosaminyl-(1-&gt;4)]-N-acetyl-alpha-D-muramoyl-L-alanyl-D-glutamyl-meso-2,6-diaminopimeloyl-D-alanyl-D-alanine + UDP + H(+). Its pathway is cell wall biogenesis; peptidoglycan biosynthesis. In terms of biological role, cell wall formation. Catalyzes the transfer of a GlcNAc subunit on undecaprenyl-pyrophosphoryl-MurNAc-pentapeptide (lipid intermediate I) to form undecaprenyl-pyrophosphoryl-MurNAc-(pentapeptide)GlcNAc (lipid intermediate II). The sequence is that of UDP-N-acetylglucosamine--N-acetylmuramyl-(pentapeptide) pyrophosphoryl-undecaprenol N-acetylglucosamine transferase from Rhodococcus opacus (strain B4).